Reading from the N-terminus, the 265-residue chain is Metal-activated transcriptional activator protein AMT1 (265 aa).

The copper-fist DNA-binding region spans 1-40; sequence MVVINGVKYACDSCIKSHKAAQCEHNDRPLKILKPRGRPP. C11, C14, C23, and H25 together coordinate Zn(2+). Residues 103–129 form a disordered region; sequence RRKRTQKSNKKDNLSINSPTNNSPSPA. Over residues 119–128 the composition is skewed to low complexity; the sequence is NSPTNNSPSP.

Its subcellular location is the nucleus. Its function is as follows. Trans-acting regulatory protein that activates transcription of the MT genes (metallothionein) in response to copper or silver ions. The chain is Metal-activated transcriptional activator protein AMT1 (AMT1) from Candida glabrata (strain ATCC 2001 / BCRC 20586 / JCM 3761 / NBRC 0622 / NRRL Y-65 / CBS 138) (Yeast).